A 176-amino-acid chain; its full sequence is Deoxyuridine 5'-triphosphate nucleotidohydrolase (176 aa).

Residues 67–69, asparagine 80, 84–86, and lysine 94 contribute to the substrate site; these read RSG and TVD. The interval 141 to 176 is disordered; sequence GGFGSTGGHASVDGAEGGITHGGNSYASVVSDREGQ.

Belongs to the dUTPase family. Mg(2+) serves as cofactor.

The enzyme catalyses dUTP + H2O = dUMP + diphosphate + H(+). Its pathway is pyrimidine metabolism; dUMP biosynthesis; dUMP from dCTP (dUTP route): step 2/2. This enzyme is involved in nucleotide metabolism: it produces dUMP, the immediate precursor of thymidine nucleotides and it decreases the intracellular concentration of dUTP so that uracil cannot be incorporated into DNA. The sequence is that of Deoxyuridine 5'-triphosphate nucleotidohydrolase from Streptomyces griseus subsp. griseus (strain JCM 4626 / CBS 651.72 / NBRC 13350 / KCC S-0626 / ISP 5235).